Here is a 249-residue protein sequence, read N- to C-terminus: Glucosamine-6-phosphate deaminase (249 aa).

Aspartate 67 (proton acceptor; for enolization step) is an active-site residue. Asparagine 136 acts as the For ring-opening step in catalysis. The active-site Proton acceptor; for ring-opening step is histidine 138. The For ring-opening step role is filled by glutamate 143.

Belongs to the glucosamine/galactosamine-6-phosphate isomerase family. NagB subfamily.

It carries out the reaction alpha-D-glucosamine 6-phosphate + H2O = beta-D-fructose 6-phosphate + NH4(+). The protein operates within amino-sugar metabolism; N-acetylneuraminate degradation; D-fructose 6-phosphate from N-acetylneuraminate: step 5/5. Its function is as follows. Catalyzes the reversible isomerization-deamination of glucosamine 6-phosphate (GlcN6P) to form fructose 6-phosphate (Fru6P) and ammonium ion. The chain is Glucosamine-6-phosphate deaminase from Clostridium botulinum (strain Alaska E43 / Type E3).